Reading from the N-terminus, the 499-residue chain is Glycerol kinase (499 aa).

Threonine 12 provides a ligand contact to ADP. ATP is bound by residues threonine 12, threonine 13, and serine 14. Threonine 12 lines the sn-glycerol 3-phosphate pocket. ADP is bound at residue arginine 16. Positions 82, 83, 135, and 245 each coordinate sn-glycerol 3-phosphate. Residues arginine 82, glutamate 83, tyrosine 135, aspartate 245, and glutamine 246 each coordinate glycerol. Residues threonine 267 and glycine 310 each contribute to the ADP site. Positions 267, 310, 314, and 411 each coordinate ATP. ADP contacts are provided by glycine 411 and asparagine 415.

The protein belongs to the FGGY kinase family. In terms of assembly, homotetramer and homodimer (in equilibrium).

The enzyme catalyses glycerol + ATP = sn-glycerol 3-phosphate + ADP + H(+). It functions in the pathway polyol metabolism; glycerol degradation via glycerol kinase pathway; sn-glycerol 3-phosphate from glycerol: step 1/1. With respect to regulation, activated by phosphorylation and inhibited by fructose 1,6-bisphosphate (FBP). In terms of biological role, key enzyme in the regulation of glycerol uptake and metabolism. Catalyzes the phosphorylation of glycerol to yield sn-glycerol 3-phosphate. This Clostridium beijerinckii (strain ATCC 51743 / NCIMB 8052) (Clostridium acetobutylicum) protein is Glycerol kinase.